The chain runs to 146 residues: Probable U6 snRNA-associated Sm-like protein LSm4 (146 aa).

Residues L2–V75 form the Sm domain. Residues Q80–P91 show a composition bias toward basic and acidic residues. The segment at Q80–G146 is disordered. Over residues G137–G146 the composition is skewed to gly residues.

Belongs to the snRNP Sm proteins family. In terms of assembly, LSm subunits form a heteromer with a doughnut shape.

The protein localises to the nucleus. Its function is as follows. Binds specifically to the 3'-terminal U-tract of U6 snRNA. This is Probable U6 snRNA-associated Sm-like protein LSm4 from Nicotiana tabacum (Common tobacco).